A 285-amino-acid polypeptide reads, in one-letter code: Probable endonuclease 4 (285 aa).

Residues His69, His109, Glu145, Asp179, His182, His216, Asp229, His231, and Glu261 each contribute to the Zn(2+) site.

It belongs to the AP endonuclease 2 family. Requires Zn(2+) as cofactor.

The catalysed reaction is Endonucleolytic cleavage to 5'-phosphooligonucleotide end-products.. In terms of biological role, endonuclease IV plays a role in DNA repair. It cleaves phosphodiester bonds at apurinic or apyrimidinic (AP) sites, generating a 3'-hydroxyl group and a 5'-terminal sugar phosphate. The protein is Probable endonuclease 4 of Salmonella arizonae (strain ATCC BAA-731 / CDC346-86 / RSK2980).